Consider the following 149-residue polypeptide: MKVVLVKDVEGLGFFGDVVNVKDGYAMNYLIPRGLALPATEGNIKHIQTILAQKERKLLREKKKAEELAKKLEGMVIGIKKPAGEGGKLFGSVTPADIVNALKEKGIEIERKNVVFYHPIKEVGVFPVKIRLHKDVEVDIKVDVKPEEK.

Belongs to the bacterial ribosomal protein bL9 family.

Binds to the 23S rRNA. This chain is Large ribosomal subunit protein bL9, found in Aquifex aeolicus (strain VF5).